A 635-amino-acid chain; its full sequence is Threonine--tRNA ligase (635 aa).

Residues 1 to 61 enclose the TGS domain; that stretch reads MINISFPDGS…DNDCKLRILT (61 aa). The segment at 242 to 533 is catalytic; that stretch reads DHRKLGRELD…LIEEYAGRFP (292 aa). Zn(2+) contacts are provided by cysteine 333, histidine 384, and histidine 510.

Belongs to the class-II aminoacyl-tRNA synthetase family. As to quaternary structure, homodimer. It depends on Zn(2+) as a cofactor.

The protein localises to the cytoplasm. The catalysed reaction is tRNA(Thr) + L-threonine + ATP = L-threonyl-tRNA(Thr) + AMP + diphosphate + H(+). Its function is as follows. Catalyzes the attachment of threonine to tRNA(Thr) in a two-step reaction: L-threonine is first activated by ATP to form Thr-AMP and then transferred to the acceptor end of tRNA(Thr). Also edits incorrectly charged L-seryl-tRNA(Thr). The protein is Threonine--tRNA ligase of Rickettsia peacockii (strain Rustic).